The following is a 332-amino-acid chain: Ribosomal RNA small subunit methyltransferase H (332 aa).

Residues 36–38 (GGY), Asp-54, Phe-81, Asp-102, and Gln-109 each bind S-adenosyl-L-methionine. A disordered region spans residues 297 to 318 (ARSAKLRGAERTEAPAHAAGDL).

Belongs to the methyltransferase superfamily. RsmH family.

The protein localises to the cytoplasm. The catalysed reaction is cytidine(1402) in 16S rRNA + S-adenosyl-L-methionine = N(4)-methylcytidine(1402) in 16S rRNA + S-adenosyl-L-homocysteine + H(+). Functionally, specifically methylates the N4 position of cytidine in position 1402 (C1402) of 16S rRNA. The chain is Ribosomal RNA small subunit methyltransferase H from Rhodopseudomonas palustris (strain TIE-1).